The sequence spans 1072 residues: DNA-directed RNA polymerase subunit beta (1072 aa).

The protein belongs to the RNA polymerase beta chain family. In terms of assembly, in plastids the minimal PEP RNA polymerase catalytic core is composed of four subunits: alpha, beta, beta', and beta''. When a (nuclear-encoded) sigma factor is associated with the core the holoenzyme is formed, which can initiate transcription.

Its subcellular location is the plastid. The protein resides in the chloroplast. The enzyme catalyses RNA(n) + a ribonucleoside 5'-triphosphate = RNA(n+1) + diphosphate. DNA-dependent RNA polymerase catalyzes the transcription of DNA into RNA using the four ribonucleoside triphosphates as substrates. The sequence is that of DNA-directed RNA polymerase subunit beta from Draba nemorosa (Woodland whitlowgrass).